Reading from the N-terminus, the 241-residue chain is Methylthioribulose-1-phosphate dehydratase (241 aa).

Cysteine 100 serves as a coordination point for substrate. Zn(2+) contacts are provided by histidine 117 and histidine 119. Residue glutamate 146 is the Proton donor/acceptor of the active site. Residue histidine 202 participates in Zn(2+) binding.

The protein belongs to the aldolase class II family. MtnB subfamily. Zn(2+) serves as cofactor.

The protein resides in the cytoplasm. It carries out the reaction 5-(methylsulfanyl)-D-ribulose 1-phosphate = 5-methylsulfanyl-2,3-dioxopentyl phosphate + H2O. It functions in the pathway amino-acid biosynthesis; L-methionine biosynthesis via salvage pathway; L-methionine from S-methyl-5-thio-alpha-D-ribose 1-phosphate: step 2/6. In terms of biological role, catalyzes the dehydration of methylthioribulose-1-phosphate (MTRu-1-P) into 2,3-diketo-5-methylthiopentyl-1-phosphate (DK-MTP-1-P). In Ajellomyces dermatitidis (strain ER-3 / ATCC MYA-2586) (Blastomyces dermatitidis), this protein is Methylthioribulose-1-phosphate dehydratase.